The sequence spans 776 residues: DNA ligase (776 aa).

NAD(+)-binding positions include 31 to 35, 80 to 81, and E112; these read DAEYD and SL. Residue K114 is the N6-AMP-lysine intermediate of the active site. NAD(+)-binding residues include R135, E172, K288, and K312. Zn(2+)-binding residues include C406, C409, C436, and C442. The 84-residue stretch at 693 to 776 folds into the BRCT domain; the sequence is AEGLPLAGQT…VFLDEQGIAI (84 aa).

It belongs to the NAD-dependent DNA ligase family. LigA subfamily. It depends on Mg(2+) as a cofactor. The cofactor is Mn(2+).

The catalysed reaction is NAD(+) + (deoxyribonucleotide)n-3'-hydroxyl + 5'-phospho-(deoxyribonucleotide)m = (deoxyribonucleotide)n+m + AMP + beta-nicotinamide D-nucleotide.. Functionally, DNA ligase that catalyzes the formation of phosphodiester linkages between 5'-phosphoryl and 3'-hydroxyl groups in double-stranded DNA using NAD as a coenzyme and as the energy source for the reaction. It is essential for DNA replication and repair of damaged DNA. The sequence is that of DNA ligase from Pseudomonas putida (strain W619).